Reading from the N-terminus, the 172-residue chain is Shikimate kinase (172 aa).

Residue 14-19 coordinates ATP; it reads GAGKST. Ser-18 is a Mg(2+) binding site. The substrate site is built by Asp-36, Arg-60, and Gly-82. Arg-120 is a binding site for ATP. Arg-139 provides a ligand contact to substrate. Gln-156 serves as a coordination point for ATP.

This sequence belongs to the shikimate kinase family. As to quaternary structure, monomer. Mg(2+) is required as a cofactor.

It is found in the cytoplasm. It carries out the reaction shikimate + ATP = 3-phosphoshikimate + ADP + H(+). It functions in the pathway metabolic intermediate biosynthesis; chorismate biosynthesis; chorismate from D-erythrose 4-phosphate and phosphoenolpyruvate: step 5/7. Catalyzes the specific phosphorylation of the 3-hydroxyl group of shikimic acid using ATP as a cosubstrate. This Aliivibrio fischeri (strain ATCC 700601 / ES114) (Vibrio fischeri) protein is Shikimate kinase.